We begin with the raw amino-acid sequence, 62 residues long: Pelophylaxin-4 (62 aa).

Positions 1–22 are cleaved as a signal peptide; that stretch reads MLTLKKSMLLIFFLGTINFSLC. A propeptide spanning residues 23-45 is cleaved from the precursor; the sequence is EQERNADEEERRDEPEERDVEVQ. Position 60 is a leucine amide (L60). Residue G61 is a propeptide.

Expressed by the skin glands.

It is found in the secreted. Functionally, antimicrobial peptide. This is Pelophylaxin-4 from Pelophylax fukienensis (Fukien gold-striped pond frog).